The primary structure comprises 518 residues: Lysine--tRNA ligase (518 aa).

Positions 1 to 28 (MTEPTQPNAAQPDAARPNVAPEMDDNKI) are disordered. Mg(2+) contacts are provided by Glu428 and Glu435.

This sequence belongs to the class-II aminoacyl-tRNA synthetase family. In terms of assembly, homodimer. Mg(2+) is required as a cofactor.

The protein resides in the cytoplasm. The catalysed reaction is tRNA(Lys) + L-lysine + ATP = L-lysyl-tRNA(Lys) + AMP + diphosphate. The protein is Lysine--tRNA ligase of Paraburkholderia phytofirmans (strain DSM 17436 / LMG 22146 / PsJN) (Burkholderia phytofirmans).